We begin with the raw amino-acid sequence, 254 residues long: Winged helix repair factor 1 (254 aa).

Residues lysine 4 to proline 21 carry the Bipartite nuclear localization signal motif. 3 winged helix domain regions span residues arginine 32–phenylalanine 104, proline 120–proline 179, and glycine 180–threonine 254.

It belongs to the STK19 family. As to quaternary structure, monomer in solution. Homodimer; when bound to DNA. Component of a transcription-coupled nucleotide excision repair (TC-NER) complex composed of STK19, ERCC6, ERCC8, DDA1, DDB1, ELOF1 and UVSSA which assembles and interacts with the multiprotein RNA polymerase II complex when it stalls at DNA lesions.

The protein resides in the nucleus. DNA-binding protein which is required for efficient transcription-coupled nucleotide excision repair (TC-NER). Acts as part of a TC-NER complex which assembles and interacts with RNA polymerase II (RNAPII) when it stalls at DNA lesions. TC-NER complex subunit UVSSA binds to the GTF2H1/p62 subunit of the TFIIH transcription factor complex, tethering TFIIH to the TC-NER complex. WHR1/STK19 then interacts with the XPD helicase subunit of TFIIH which guides TFIIH to DNA downstream of the stalled RNAPII, ensuring DNA repair. Directly interacts with RNAPII and also binds to downstream DNA. Promotes the timely removal of DNA damage-stalled RNAPII, allowing downstream NER factors to access DNA lesions. Required for monoubiquitination of UVSSA. Regulates repositioning and stabilization of UVSSA within the TC-NER complex. Stimulates ubiquitination of RNAPII complex member RBP1. Also binds to RNA and regulates the expression levels of many mRNAs. The sequence is that of Winged helix repair factor 1 from Mus musculus (Mouse).